Consider the following 283-residue polypeptide: Pantothenate synthetase (283 aa).

30-37 (MGNLHSGH) serves as a coordination point for ATP. Catalysis depends on H37, which acts as the Proton donor. (R)-pantoate is bound at residue Q61. Q61 contributes to the beta-alanine binding site. 149–152 (GEKD) contacts ATP. Residue Q155 participates in (R)-pantoate binding. ATP contacts are provided by residues V178 and 186–189 (LSSR).

Belongs to the pantothenate synthetase family. In terms of assembly, homodimer.

The protein localises to the cytoplasm. It catalyses the reaction (R)-pantoate + beta-alanine + ATP = (R)-pantothenate + AMP + diphosphate + H(+). The protein operates within cofactor biosynthesis; (R)-pantothenate biosynthesis; (R)-pantothenate from (R)-pantoate and beta-alanine: step 1/1. Its function is as follows. Catalyzes the condensation of pantoate with beta-alanine in an ATP-dependent reaction via a pantoyl-adenylate intermediate. The polypeptide is Pantothenate synthetase (Pseudomonas savastanoi pv. phaseolicola (strain 1448A / Race 6) (Pseudomonas syringae pv. phaseolicola (strain 1448A / Race 6))).